The following is a 346-amino-acid chain: Holliday junction branch migration complex subunit RuvB (346 aa).

Residues 1 to 182 (MSEAARLIAP…FGIPVRLNFY (182 aa)) are large ATPase domain (RuvB-L). Residues Leu21, Arg22, Gly63, Lys66, Thr67, Thr68, 129–131 (EDF), Arg172, Tyr182, and Arg219 each bind ATP. A Mg(2+)-binding site is contributed by Thr67. The interval 183-253 (TVEELELIVR…IADEALTRLL (71 aa)) is small ATPAse domain (RuvB-S). Positions 256–346 (SMGLDQLDRR…SQFRLTLEDD (91 aa)) are head domain (RuvB-H). Residues Arg292, Arg311, and Arg316 each contribute to the DNA site.

This sequence belongs to the RuvB family. Homohexamer. Forms an RuvA(8)-RuvB(12)-Holliday junction (HJ) complex. HJ DNA is sandwiched between 2 RuvA tetramers; dsDNA enters through RuvA and exits via RuvB. An RuvB hexamer assembles on each DNA strand where it exits the tetramer. Each RuvB hexamer is contacted by two RuvA subunits (via domain III) on 2 adjacent RuvB subunits; this complex drives branch migration. In the full resolvosome a probable DNA-RuvA(4)-RuvB(12)-RuvC(2) complex forms which resolves the HJ.

It is found in the cytoplasm. The catalysed reaction is ATP + H2O = ADP + phosphate + H(+). The RuvA-RuvB-RuvC complex processes Holliday junction (HJ) DNA during genetic recombination and DNA repair, while the RuvA-RuvB complex plays an important role in the rescue of blocked DNA replication forks via replication fork reversal (RFR). RuvA specifically binds to HJ cruciform DNA, conferring on it an open structure. The RuvB hexamer acts as an ATP-dependent pump, pulling dsDNA into and through the RuvAB complex. RuvB forms 2 homohexamers on either side of HJ DNA bound by 1 or 2 RuvA tetramers; 4 subunits per hexamer contact DNA at a time. Coordinated motions by a converter formed by DNA-disengaged RuvB subunits stimulates ATP hydrolysis and nucleotide exchange. Immobilization of the converter enables RuvB to convert the ATP-contained energy into a lever motion, pulling 2 nucleotides of DNA out of the RuvA tetramer per ATP hydrolyzed, thus driving DNA branch migration. The RuvB motors rotate together with the DNA substrate, which together with the progressing nucleotide cycle form the mechanistic basis for DNA recombination by continuous HJ branch migration. Branch migration allows RuvC to scan DNA until it finds its consensus sequence, where it cleaves and resolves cruciform DNA. This chain is Holliday junction branch migration complex subunit RuvB, found in Sinorhizobium medicae (strain WSM419) (Ensifer medicae).